A 212-amino-acid polypeptide reads, in one-letter code: Acyl-homoserine-lactone synthase (212 aa).

It belongs to the autoinducer synthase family.

The catalysed reaction is a fatty acyl-[ACP] + S-adenosyl-L-methionine = an N-acyl-L-homoserine lactone + S-methyl-5'-thioadenosine + holo-[ACP] + H(+). Required for the synthesis of OHHL (N-(3-oxohexanoyl)-L-homoserine lactone), an autoinducer molecule which binds to TraR and thus acts in the control of conjugal transfer. This is Acyl-homoserine-lactone synthase (traI) from Rhizobium radiobacter (Agrobacterium tumefaciens).